The primary structure comprises 850 residues: Translation initiation factor IF-2 (850 aa).

2 disordered regions span residues 50 to 72 (LKSS…KTTS) and 92 to 267 (FVQR…TGPV). Positions 96–135 (SPEEIQAEQKREQEERRAAENAAREKADADARQRNEEQAR) are enriched in basic and acidic residues. Residues 136 to 172 (RQAAQAPAAAPVAKAEPAPAAAAPAAPAVPDAPVSED) are compositionally biased toward low complexity. 2 stretches are compositionally biased toward basic and acidic residues: residues 173-210 (AAAR…RGEA) and 234-243 (TTDEESDGFR). Residues 244–257 (RGRGGKGKPKKRNQ) show a composition bias toward basic residues. The tr-type G domain maps to 350 to 517 (SRAPVVTVMG…AVLLQAEILE (168 aa)). The G1 stretch occupies residues 359–366 (GHVDHGKT). 359–366 (GHVDHGKT) lines the GTP pocket. A G2 region spans residues 384-388 (GITQH). The G3 stretch occupies residues 405–408 (DTPG). GTP is bound by residues 405–409 (DTPGH) and 459–462 (NKID). The G4 stretch occupies residues 459–462 (NKID). The segment at 495–497 (SAK) is G5.

This sequence belongs to the TRAFAC class translation factor GTPase superfamily. Classic translation factor GTPase family. IF-2 subfamily.

It localises to the cytoplasm. Its function is as follows. One of the essential components for the initiation of protein synthesis. Protects formylmethionyl-tRNA from spontaneous hydrolysis and promotes its binding to the 30S ribosomal subunits. Also involved in the hydrolysis of GTP during the formation of the 70S ribosomal complex. This is Translation initiation factor IF-2 from Pseudomonas entomophila (strain L48).